Reading from the N-terminus, the 530-residue chain is Na(+)/H(+) antiporter NhaB (530 aa).

13 consecutive transmembrane segments (helical) span residues 13 to 33, 34 to 54, 64 to 84, 90 to 110, 113 to 133, 136 to 156, 205 to 225, 234 to 254, 306 to 326, 351 to 371, 378 to 400, 450 to 470, and 481 to 501; these read FLGK…IINP, FVFF…EFIF, PLQP…TSPA, LVAN…IYFM, LLLY…LLSL, CLMA…AVVI, LLMH…VGEP, AGWL…PVFM, ALIA…VGLI, EEAL…AVII, PIIS…IANG, ATPN…APLI, and ALPY…FMLL.

It belongs to the NhaB Na(+)/H(+) (TC 2.A.34) antiporter family.

It is found in the cell inner membrane. It carries out the reaction 2 Na(+)(in) + 3 H(+)(out) = 2 Na(+)(out) + 3 H(+)(in). In terms of biological role, na(+)/H(+) antiporter that extrudes sodium in exchange for external protons. This chain is Na(+)/H(+) antiporter NhaB, found in Photobacterium profundum (strain SS9).